A 104-amino-acid chain; its full sequence is Large ribosomal subunit protein bL21 (104 aa).

This sequence belongs to the bacterial ribosomal protein bL21 family. Part of the 50S ribosomal subunit. Contacts protein L20.

Its function is as follows. This protein binds to 23S rRNA in the presence of protein L20. This chain is Large ribosomal subunit protein bL21, found in Lactococcus lactis subsp. lactis (strain IL1403) (Streptococcus lactis).